We begin with the raw amino-acid sequence, 122 residues long: Small ribosomal subunit protein uS12 (122 aa).

Residues 1-24 are disordered; that stretch reads MPTINQLIRKKRKSTGKKRTAPAL. Residues 8 to 20 are compositionally biased toward basic residues; the sequence is IRKKRKSTGKKRT. Residue Asp89 is modified to 3-methylthioaspartic acid.

Belongs to the universal ribosomal protein uS12 family. In terms of assembly, part of the 30S ribosomal subunit. Contacts proteins S8 and S17. May interact with IF1 in the 30S initiation complex.

In terms of biological role, with S4 and S5 plays an important role in translational accuracy. Its function is as follows. Interacts with and stabilizes bases of the 16S rRNA that are involved in tRNA selection in the A site and with the mRNA backbone. Located at the interface of the 30S and 50S subunits, it traverses the body of the 30S subunit contacting proteins on the other side and probably holding the rRNA structure together. The combined cluster of proteins S8, S12 and S17 appears to hold together the shoulder and platform of the 30S subunit. The chain is Small ribosomal subunit protein uS12 from Natranaerobius thermophilus (strain ATCC BAA-1301 / DSM 18059 / JW/NM-WN-LF).